Here is a 192-residue protein sequence, read N- to C-terminus: Large ribosomal subunit protein uL5 (192 aa).

This sequence belongs to the universal ribosomal protein uL5 family. Part of the 50S ribosomal subunit; part of the 5S rRNA/L5/L18/L25 subcomplex. Contacts the 5S rRNA and the P site tRNA. Forms a bridge to the 30S subunit in the 70S ribosome.

In terms of biological role, this is one of the proteins that bind and probably mediate the attachment of the 5S RNA into the large ribosomal subunit, where it forms part of the central protuberance. In the 70S ribosome it contacts protein S13 of the 30S subunit (bridge B1b), connecting the 2 subunits; this bridge is implicated in subunit movement. Contacts the P site tRNA; the 5S rRNA and some of its associated proteins might help stabilize positioning of ribosome-bound tRNAs. The protein is Large ribosomal subunit protein uL5 of Sphingopyxis alaskensis (strain DSM 13593 / LMG 18877 / RB2256) (Sphingomonas alaskensis).